The chain runs to 183 residues: Alkyl hydroperoxide reductase AhpD (183 aa).

Cys-132 serves as the catalytic Proton donor. Cys-132 and Cys-135 are joined by a disulfide. Cys-135 acts as the Cysteine sulfenic acid (-SOH) intermediate in catalysis.

This sequence belongs to the AhpD family.

The enzyme catalyses N(6)-[(R)-dihydrolipoyl]-L-lysyl-[lipoyl-carrier protein] + a hydroperoxide = N(6)-[(R)-lipoyl]-L-lysyl-[lipoyl-carrier protein] + an alcohol + H2O. Its function is as follows. Antioxidant protein with alkyl hydroperoxidase activity. Required for the reduction of the AhpC active site cysteine residues and for the regeneration of the AhpC enzyme activity. The chain is Alkyl hydroperoxide reductase AhpD from Acidobacterium capsulatum (strain ATCC 51196 / DSM 11244 / BCRC 80197 / JCM 7670 / NBRC 15755 / NCIMB 13165 / 161).